A 385-amino-acid polypeptide reads, in one-letter code: Xanthosine methyltransferase 2 (385 aa).

Y18 is an S-adenosyl-L-homocysteine binding site. Residues N21 and N25 each contribute to the xanthosine site. S-adenosyl-L-homocysteine is bound by residues C62, N67, D101, L102, S140, F141, and C157. A xanthosine-binding site is contributed by Y158. C159 serves as a coordination point for S-adenosyl-L-homocysteine. Xanthosine-binding residues include H161 and W162. Mg(2+)-binding residues include N179, D261, F263, and N264. Xanthosine-binding residues include S329, Y334, and Y369.

Belongs to the methyltransferase superfamily. Type-7 methyltransferase family. Requires Mg(2+) as cofactor. Expressed at low levels in young leaves but not in mature leaves. Barely detectable in fruits (grains).

It carries out the reaction xanthosine + S-adenosyl-L-methionine = 7-methylxanthosine + S-adenosyl-L-homocysteine. It participates in alkaloid biosynthesis. Its function is as follows. Involved in the biosynthesis of caffeine. Specific for xanthosine and could not use xanthosine 5'-monophosphate (XMP) as substrate. Catalyzes the 7-N-methylation activity of xanthosine, but does not have 1-N- or 3-N-methylation activity. This chain is Xanthosine methyltransferase 2, found in Coffea arabica (Arabian coffee).